A 164-amino-acid chain; its full sequence is Phosphopantetheine adenylyltransferase (164 aa).

S10 serves as a coordination point for substrate. ATP-binding positions include 10-11 (SF) and H18. Substrate is bound by residues K42, L74, and R88. Residues 89–91 (GLR), E99, and 124–130 (YSFLSSS) each bind ATP.

It belongs to the bacterial CoaD family. In terms of assembly, homohexamer. Requires Mg(2+) as cofactor.

It localises to the cytoplasm. It catalyses the reaction (R)-4'-phosphopantetheine + ATP + H(+) = 3'-dephospho-CoA + diphosphate. It functions in the pathway cofactor biosynthesis; coenzyme A biosynthesis; CoA from (R)-pantothenate: step 4/5. Reversibly transfers an adenylyl group from ATP to 4'-phosphopantetheine, yielding dephospho-CoA (dPCoA) and pyrophosphate. In Exiguobacterium sibiricum (strain DSM 17290 / CCUG 55495 / CIP 109462 / JCM 13490 / 255-15), this protein is Phosphopantetheine adenylyltransferase.